The chain runs to 348 residues: tRNA N6-adenosine threonylcarbamoyltransferase (348 aa).

Fe cation-binding residues include histidine 114 and histidine 118. Residues leucine 137–glycine 141, aspartate 171, glycine 184, aspartate 188, and asparagine 283 contribute to the substrate site. Fe cation is bound at residue aspartate 311.

Belongs to the KAE1 / TsaD family. Fe(2+) serves as cofactor.

The protein localises to the cytoplasm. It carries out the reaction L-threonylcarbamoyladenylate + adenosine(37) in tRNA = N(6)-L-threonylcarbamoyladenosine(37) in tRNA + AMP + H(+). In terms of biological role, required for the formation of a threonylcarbamoyl group on adenosine at position 37 (t(6)A37) in tRNAs that read codons beginning with adenine. Is involved in the transfer of the threonylcarbamoyl moiety of threonylcarbamoyl-AMP (TC-AMP) to the N6 group of A37, together with TsaE and TsaB. TsaD likely plays a direct catalytic role in this reaction. This chain is tRNA N6-adenosine threonylcarbamoyltransferase, found in Nocardioides sp. (strain ATCC BAA-499 / JS614).